The chain runs to 1322 residues: Putative DNA ligase 4 (1322 aa).

Residues Glu265, Lys267, Arg272, Arg287, Glu317, Phe387, Glu497, Lys502, Arg513, Lys519, and Lys521 each contribute to the ATP site. Lys267 acts as the N6-AMP-lysine intermediate in catalysis. Position 317 (Glu317) interacts with Mg(2+). Glu497 contributes to the Mg(2+) binding site. 2 BRCT domains span residues 686 to 768 and 825 to 935; these read LDVQ…PKFD and ERFC…TYSL. Disordered stretches follow at residues 945 to 1212 and 1245 to 1310; these read IERS…SATC and AEAK…KKVS. Over residues 957-969 the composition is skewed to basic and acidic residues; that stretch reads DKLEENEKADTSH. Composition is skewed to basic residues over residues 970–979 and 994–1005; these read VKHAPRKRGR and PVRRTRARRGNQ. 2 stretches are compositionally biased toward basic and acidic residues: residues 1007 to 1022 and 1033 to 1047; these read AKIDDVEPEESDHGET and NISKMEVDSFDKDQV. Over residues 1051-1063 the composition is skewed to basic residues; sequence PVRRTRARRGKQH. Composition is skewed to basic and acidic residues over residues 1082–1104, 1125–1161, and 1190–1204; these read DDQRLDADYISKMEEDSSDRDQG, AKIDRETGPGETGQDDKKLNADSISKMEEHAHDKDQE, and PKHERNQTVLRRDTA. Positions 1261 to 1288 are enriched in low complexity; the sequence is SSYVAPVPQASASSASSSGVPAPHAGSS.

The protein belongs to the ATP-dependent DNA ligase family. Mg(2+) is required as a cofactor.

The protein localises to the nucleus. It catalyses the reaction ATP + (deoxyribonucleotide)n-3'-hydroxyl + 5'-phospho-(deoxyribonucleotide)m = (deoxyribonucleotide)n+m + AMP + diphosphate.. Its function is as follows. DNA ligase involved in DNA non-homologous end joining (NHEJ); required for double-strand break (DSB) repair. The chain is Putative DNA ligase 4 (LIG4) from Oryza sativa subsp. japonica (Rice).